Consider the following 309-residue polypeptide: Homoserine kinase (309 aa).

An ATP-binding site is contributed by 91-101 (PIGSGLGSSAC).

This sequence belongs to the GHMP kinase family. Homoserine kinase subfamily.

It localises to the cytoplasm. The catalysed reaction is L-homoserine + ATP = O-phospho-L-homoserine + ADP + H(+). It participates in amino-acid biosynthesis; L-threonine biosynthesis; L-threonine from L-aspartate: step 4/5. Catalyzes the ATP-dependent phosphorylation of L-homoserine to L-homoserine phosphate. This Salmonella agona (strain SL483) protein is Homoserine kinase.